The sequence spans 175 residues: Calcineurin subunit B (175 aa).

EF-hand domains are found at residues 21–56 (DEIE…SANP), 60–88 (RIME…FSGR), 90–125 (SKDE…MVGS), and 131–166 (QLQQ…TEVA). Ca(2+)-binding residues include aspartate 34, aspartate 36, serine 38, serine 40, glutamate 45, aspartate 66, aspartate 68, serine 70, aspartate 72, glutamate 77, aspartate 103, aspartate 105, aspartate 107, glutamate 114, aspartate 144, aspartate 146, aspartate 148, glutamine 150, and glutamate 155.

This sequence belongs to the calcineurin regulatory subunit family. In terms of assembly, composed of a catalytic subunit (A) and a regulatory subunit (B).

Regulatory subunit of calcineurin, a calcium-dependent, calmodulin stimulated protein phosphatase. Confers calcium sensitivity. The chain is Calcineurin subunit B (CNB1) from Candida glabrata (strain ATCC 2001 / BCRC 20586 / JCM 3761 / NBRC 0622 / NRRL Y-65 / CBS 138) (Yeast).